The following is a 251-amino-acid chain: Pyrroloquinoline-quinone synthase (251 aa).

Belongs to the PqqC family.

The catalysed reaction is 6-(2-amino-2-carboxyethyl)-7,8-dioxo-1,2,3,4,7,8-hexahydroquinoline-2,4-dicarboxylate + 3 O2 = pyrroloquinoline quinone + 2 H2O2 + 2 H2O + H(+). It functions in the pathway cofactor biosynthesis; pyrroloquinoline quinone biosynthesis. Ring cyclization and eight-electron oxidation of 3a-(2-amino-2-carboxyethyl)-4,5-dioxo-4,5,6,7,8,9-hexahydroquinoline-7,9-dicarboxylic-acid to PQQ. The chain is Pyrroloquinoline-quinone synthase from Pseudomonas putida (strain ATCC 47054 / DSM 6125 / CFBP 8728 / NCIMB 11950 / KT2440).